Here is a 1357-residue protein sequence, read N- to C-terminus: Ubiquitin carboxyl-terminal hydrolase 19 (1357 aa).

3 disordered regions span residues 1 to 52, 162 to 239, and 275 to 296; these read MSAG…PTKD, LSPI…SDSA, and VSPR…EKDD. The Cytoplasmic segment spans residues 1 to 1330; sequence MSAGTSATGP…TTSDEGCLRY (1330 aa). 2 stretches are compositionally biased toward basic and acidic residues: residues 28-52 and 171-182; these read DRAN…PTKD and SEPRRAKQEARN. Residues 51-140 enclose the CS 1 domain; it reads KDELLLDWRQ…VPLLTWPSLL (90 aa). Over residues 194–206 the composition is skewed to low complexity; sequence SGASPGAQAGPSA. Ser221 and Ser283 each carry phosphoserine. In terms of domain architecture, CS 2 spans 321–423; that stretch reads LAFVKNDSYE…RQSQRWGGLE (103 aa). The interval 432–479 is disordered; it reads AKVAVPTGPTPLDSTPPGGGPLPLTGQEEARAVEKEKPKARSEDSGLD. A compositionally biased stretch (low complexity) spans 437–457; sequence PTGPTPLDSTPPGGGPLPLTG. The span at 459 to 475 shows a compositional bias: basic and acidic residues; sequence EEARAVEKEKPKARSED. Residues 536 to 1253 enclose the USP domain; sequence TGLVNLGNTC…YAYVLFYRRR (718 aa). The active-site Nucleophile is Cys545. Cys830, Cys833, Cys847, Cys850, Cys856, Cys860, His868, and Cys872 together coordinate Zn(2+). The segment at 830–872 adopts an MYND-type zinc-finger fold; sequence CAACQRKQQSEDEKLKRCTRCYRVGYCNQFCQKTHWPDHKGLC. A disordered region spans residues 962 to 981; that stretch reads DTGAHRMWPPADRGPVPSTS. Residue His1204 is the Proton acceptor of the active site. Basic and acidic residues predominate over residues 1259–1271; the sequence is RPPRAAHAEHHPD. 2 disordered regions span residues 1259–1278 and 1292–1320; these read RPPR…AAEA and AEEE…PRGP. The helical transmembrane segment at 1331–1351 threads the bilayer; the sequence is FVLGTVAALVALVLNVFYPLV. At 1352 to 1357 the chain is on the lumenal side; that stretch reads SQSRWR.

As to quaternary structure, interacts with RNF123. Interacts with BIRC2/c-IAP1, BIRC3/c-IAP2 and XIAP/BIRC4. Interacts with HIF1A (via N-terminus). In terms of tissue distribution, expressed in testis, heart, kidney and skeletal muscle. Low levels of expression are detectable in all other tissues screened.

It is found in the endoplasmic reticulum membrane. It carries out the reaction Thiol-dependent hydrolysis of ester, thioester, amide, peptide and isopeptide bonds formed by the C-terminal Gly of ubiquitin (a 76-residue protein attached to proteins as an intracellular targeting signal).. Its function is as follows. Deubiquitinating enzyme that regulates the degradation of various proteins by removing ubiquitin moieties, thereby preventing their proteasomal degradation. Stabilizes RNF123, which promotes CDKN1B degradation and contributes to cell proliferation. Decreases the levels of ubiquitinated proteins during skeletal muscle formation and acts to repress myogenesis. Modulates transcription of major myofibrillar proteins. Also involved in turnover of endoplasmic-reticulum-associated degradation (ERAD) substrates. Mechanistically, deubiquitinates and thereby stabilizes several E3 ligases involved in the ERAD pathway including SYVN1 or MARCHF6. Regulates the stability of other E3 ligases including BIRC2/c-IAP1 and BIRC3/c-IAP2 by preventing their ubiquitination. Required for cells to mount an appropriate response to hypoxia by rescuing HIF1A from degradation in a non-catalytic manner and by mediating the deubiquitination of FUNDC1. Attenuates mitochondrial damage and ferroptosis by targeting and stabilizing NADPH oxidase 4/NOX4. Negatively regulates TNF-alpha- and IL-1beta-triggered NF-kappa-B activation by hydrolyzing 'Lys-27'- and 'Lys-63'-linked polyubiquitin chains from MAP3K7. Modulates also the protein level and aggregation of polyQ-expanded huntingtin/HTT through HSP90AA1. This is Ubiquitin carboxyl-terminal hydrolase 19 (Usp19) from Rattus norvegicus (Rat).